Here is a 1385-residue protein sequence, read N- to C-terminus: MLNSLHSGNRLRVDFSKTPREIEIPNLLQLQQKSYENFLMLGERDRKHSTLERVFRSAFPIHDQQNRLTLTYKNSEIIKPKYTVRECMERGLTYSVSLKMNIALTIWNRDEKTGEKLDPKEIKEQAVFVRDIPLMTERTSFVVNGVERVIVNQLHRSPGVIFKEEESTTAGHKLLYSAQIIPDRGSWLYFEYDAKDILYARINKRRKIPVTILFRALDYTKEDIVKLFYPTKEISIKDNRFLVKFDPSDFSGRAEYDVKDMDGNVIVNAGKRLTKKKAQQLIENGLEWIEYPLEMLMERHLATAVIDQESGEVLYDVVAPLDETKLKKMIEQGIESIEIINDLAEGTDKSIINAFIADNESLRLLKQTEEIDDENVLSAIRIYKVMRPGEPVTPEAAKSFLRQLFFDPERYDLTEVGRMKMNHKLGLDIPQYATVLTAEDLINTVKYLIKVKNGHGHIDDRDHLGNRRIRAIGELLGNELHNGLVKMQKAIKDKMTTISGTLDELMPHDLVNSKMITNTILEFFSSGQLSQFMDQTNPLSEVTHKRRLSALGEGGLVKERAGFEVRDVHPTHYGRICPIETPEGQNIGLINTLATYSKVNEHGFIEAPYKVVKDAQVTDEIVYITATQEEDKCIAPASTKVDENGKIVEDLIETRLNGNIELNEAKRVDLIDISPLMISGSAAALIPFLEHDDANRALMGSNMQRQAVPLLKTDAPVVGTGMEAIVSRDAWEAVKAKRAGKVEKVDAKNIYIMGEDETGVFIDHYPLEKNMRTNQNTTFTQTPIVKLGDVIEVGQVIADGANMDQGELAIGKNIMVAFMPWYGYNYEDAIIVSEKIIREDTFTSVHTYEKEVEARELKHGTEEITRDIPNIREDELLHLDESGIVQLGTYVKPGMILVGKVSPKGEIKPTPEERLLRAIFGEKAGHVVNKSLYCPASMEGVVVDIKVFTKKGYEKDARAIQAYEEEKAILDSDHHDQLLMIDREEILRIAHYLSGQELAKDVTIGDKEYKAGSKIDEETIKGVNRFALRGVVQSYSDDVQNEYEALKNYFLKQKKRLKNEHEEKLSILEKDDILPSGVTKLVKIYIATKRKLKVGDKMAGRHGNKGIVSNIVPEIDMPYMEDGRPVEIILNPLGVPSRMNIGQILEVHLGLVGMRLGEQIQEMFDNKTADFIKELRAKMIEIADVAKLMNAKEVLSQMSDEELLAYGRDWSRGVKFAAPVFEGTNQTEFDKLFELAKIESDGKMTLYDGKTGEKMIERVNVGYMYMLKLHHLVDEKVHARSTGPYSLVTQQPVGGKALFGGQRFGEMEVWALEAYGASHILKEMLTIKSDDVEGRARAYRALTKGESVPASGVPETMFVLTKELQALGLDAELYESKKEVESEDE.

This sequence belongs to the RNA polymerase beta chain family. In terms of assembly, the RNAP catalytic core consists of 2 alpha, 1 beta, 1 beta' and 1 omega subunit. When a sigma factor is associated with the core the holoenzyme is formed, which can initiate transcription.

It carries out the reaction RNA(n) + a ribonucleoside 5'-triphosphate = RNA(n+1) + diphosphate. DNA-dependent RNA polymerase catalyzes the transcription of DNA into RNA using the four ribonucleoside triphosphates as substrates. The sequence is that of DNA-directed RNA polymerase subunit beta from Sulfurovum sp. (strain NBC37-1).